The following is a 353-amino-acid chain: Photosystem II protein D1 (353 aa).

The residue at position 2 (Thr2) is an N-acetylthreonine. Position 2 is a phosphothreonine (Thr2). Transmembrane regions (helical) follow at residues 29 to 46, 118 to 133, and 142 to 156; these read YIGW…TATS, HFLL…EWEL, and WIAV…AATA. His118 is a chlorophyll a binding site. A pheophytin a-binding site is contributed by Tyr126. Asp170 and Glu189 together coordinate [CaMn4O5] cluster. The chain crosses the membrane as a helical span at residues 197-218; sequence FHMLGVAGVFGGSLFSAMHGSL. His198 provides a ligand contact to chlorophyll a. Residues His215 and 264-265 contribute to the a quinone site; that span reads SF. Position 215 (His215) interacts with Fe cation. Position 272 (His272) interacts with Fe cation. The chain crosses the membrane as a helical span at residues 274-288; sequence FLAAWPVVGIWFTSL. His332, Glu333, Asp342, and Ala344 together coordinate [CaMn4O5] cluster. Residues 345-353 constitute a propeptide that is removed on maturation; it reads AIDAPSVNG.

This sequence belongs to the reaction center PufL/M/PsbA/D family. PSII is composed of 1 copy each of membrane proteins PsbA, PsbB, PsbC, PsbD, PsbE, PsbF, PsbH, PsbI, PsbJ, PsbK, PsbL, PsbM, PsbT, PsbX, PsbY, PsbZ, Psb30/Ycf12, at least 3 peripheral proteins of the oxygen-evolving complex and a large number of cofactors. It forms dimeric complexes. It depends on The D1/D2 heterodimer binds P680, chlorophylls that are the primary electron donor of PSII, and subsequent electron acceptors. It shares a non-heme iron and each subunit binds pheophytin, quinone, additional chlorophylls, carotenoids and lipids. D1 provides most of the ligands for the Mn4-Ca-O5 cluster of the oxygen-evolving complex (OEC). There is also a Cl(-1) ion associated with D1 and D2, which is required for oxygen evolution. The PSII complex binds additional chlorophylls, carotenoids and specific lipids. as a cofactor. In terms of processing, tyr-161 forms a radical intermediate that is referred to as redox-active TyrZ, YZ or Y-Z. Post-translationally, C-terminally processed by CTPA; processing is essential to allow assembly of the oxygen-evolving complex and thus photosynthetic growth.

It is found in the plastid. The protein resides in the chloroplast thylakoid membrane. The enzyme catalyses 2 a plastoquinone + 4 hnu + 2 H2O = 2 a plastoquinol + O2. Photosystem II (PSII) is a light-driven water:plastoquinone oxidoreductase that uses light energy to abstract electrons from H(2)O, generating O(2) and a proton gradient subsequently used for ATP formation. It consists of a core antenna complex that captures photons, and an electron transfer chain that converts photonic excitation into a charge separation. The D1/D2 (PsbA/PsbD) reaction center heterodimer binds P680, the primary electron donor of PSII as well as several subsequent electron acceptors. This chain is Photosystem II protein D1, found in Coffea arabica (Arabian coffee).